A 229-amino-acid polypeptide reads, in one-letter code: Wtf element wtf14 (229 aa).

Basic and acidic residues predominate over residues 1–26 (MENNHHLAKDSLDELNPKRGKGEHET). The interval 1–27 (MENNHHLAKDSLDELNPKRGKGEHETQ) is disordered. 4 consecutive transmembrane segments (helical) span residues 71–91 (IPAV…YLVF), 100–120 (VLFG…LLAT), 151–171 (LYAI…LMFF), and 188–208 (VIGV…PGLF).

It belongs to the WTF family.

The protein resides in the endoplasmic reticulum membrane. Its function is as follows. May act in meiotic drive. In Schizosaccharomyces kambucha (Fission yeast), this protein is Wtf element wtf14.